The following is a 237-amino-acid chain: Ribonuclease PH (237 aa).

Residues arginine 86 and glycine 124–arginine 126 each bind phosphate.

Belongs to the RNase PH family. Homohexameric ring arranged as a trimer of dimers.

It carries out the reaction tRNA(n+1) + phosphate = tRNA(n) + a ribonucleoside 5'-diphosphate. Phosphorolytic 3'-5' exoribonuclease that plays an important role in tRNA 3'-end maturation. Removes nucleotide residues following the 3'-CCA terminus of tRNAs; can also add nucleotides to the ends of RNA molecules by using nucleoside diphosphates as substrates, but this may not be physiologically important. Probably plays a role in initiation of 16S rRNA degradation (leading to ribosome degradation) during starvation. This chain is Ribonuclease PH, found in Rhodopseudomonas palustris (strain ATCC BAA-98 / CGA009).